The primary structure comprises 247 residues: NH(3)-dependent NAD(+) synthetase (247 aa).

ATP is bound at residue 29–36 (GLSGGVDS). Asp-35 provides a ligand contact to Mg(2+). Arg-112 is a binding site for deamido-NAD(+). Thr-132 is an ATP binding site. Glu-137 contacts Mg(2+). 2 residues coordinate deamido-NAD(+): Lys-145 and Asp-152. ATP-binding residues include Lys-161 and Ser-183. 233 to 234 (HK) contributes to the deamido-NAD(+) binding site.

Belongs to the NAD synthetase family. Homodimer.

It carries out the reaction deamido-NAD(+) + NH4(+) + ATP = AMP + diphosphate + NAD(+) + H(+). Its pathway is cofactor biosynthesis; NAD(+) biosynthesis; NAD(+) from deamido-NAD(+) (ammonia route): step 1/1. Its function is as follows. Catalyzes the ATP-dependent amidation of deamido-NAD to form NAD. Uses ammonia as a nitrogen source. The polypeptide is NH(3)-dependent NAD(+) synthetase (Archaeoglobus fulgidus (strain ATCC 49558 / DSM 4304 / JCM 9628 / NBRC 100126 / VC-16)).